Consider the following 63-residue polypeptide: DNA gyrase inhibitor YacG (63 aa).

Zn(2+)-binding residues include Cys-9, Cys-12, Cys-28, and Cys-32.

This sequence belongs to the DNA gyrase inhibitor YacG family. In terms of assembly, interacts with GyrB. It depends on Zn(2+) as a cofactor.

In terms of biological role, inhibits all the catalytic activities of DNA gyrase by preventing its interaction with DNA. Acts by binding directly to the C-terminal domain of GyrB, which probably disrupts DNA binding by the gyrase. This is DNA gyrase inhibitor YacG from Salmonella paratyphi A (strain AKU_12601).